The following is a 358-amino-acid chain: Methionine import ATP-binding protein MetN (358 aa).

One can recognise an ABC transporter domain in the interval 2-247 (ITTTGLTKVY…PGSELAHELF (246 aa)). 38–45 (GQSGAGKS) is a binding site for ATP.

The protein belongs to the ABC transporter superfamily. Methionine importer (TC 3.A.1.24) family. In terms of assembly, the complex is composed of two ATP-binding proteins (MetN), two transmembrane proteins (MetI) and a solute-binding protein (MetQ).

Its subcellular location is the cell membrane. It carries out the reaction L-methionine(out) + ATP + H2O = L-methionine(in) + ADP + phosphate + H(+). The enzyme catalyses D-methionine(out) + ATP + H2O = D-methionine(in) + ADP + phosphate + H(+). Its function is as follows. Part of the ABC transporter complex MetNIQ involved in methionine import. Responsible for energy coupling to the transport system. The protein is Methionine import ATP-binding protein MetN of Streptomyces griseus.